Here is a 425-residue protein sequence, read N- to C-terminus: Serine--tRNA ligase (425 aa).

An L-serine-binding site is contributed by Thr-231–Glu-233. Residue Arg-262–Glu-264 coordinates ATP. Position 285 (Glu-285) interacts with L-serine. Glu-349–Ser-352 contacts ATP. L-serine is bound at residue Ser-385.

This sequence belongs to the class-II aminoacyl-tRNA synthetase family. Type-1 seryl-tRNA synthetase subfamily. Homodimer. The tRNA molecule binds across the dimer.

It is found in the cytoplasm. The catalysed reaction is tRNA(Ser) + L-serine + ATP = L-seryl-tRNA(Ser) + AMP + diphosphate + H(+). It catalyses the reaction tRNA(Sec) + L-serine + ATP = L-seryl-tRNA(Sec) + AMP + diphosphate + H(+). Its pathway is aminoacyl-tRNA biosynthesis; selenocysteinyl-tRNA(Sec) biosynthesis; L-seryl-tRNA(Sec) from L-serine and tRNA(Sec): step 1/1. Its function is as follows. Catalyzes the attachment of serine to tRNA(Ser). Is also able to aminoacylate tRNA(Sec) with serine, to form the misacylated tRNA L-seryl-tRNA(Sec), which will be further converted into selenocysteinyl-tRNA(Sec). The sequence is that of Serine--tRNA ligase from Bartonella bacilliformis (strain ATCC 35685 / KC583 / Herrer 020/F12,63).